Here is a 312-residue protein sequence, read N- to C-terminus: Short-chain dehydrogenase/reductase pkfC (312 aa).

NADP(+) is bound by residues Lys-56, Asn-108, and Lys-140. The active-site Proton donor is the Ser-164. NADP(+)-binding residues include Tyr-193 and Lys-197. Tyr-193 (proton acceptor) is an active-site residue. The Lowers pKa of active site Tyr role is filled by Lys-197.

This sequence belongs to the short-chain dehydrogenases/reductases (SDR) family.

It participates in secondary metabolite biosynthesis. In terms of biological role, short-chain dehydrogenase/reductase; part of the gene cluster that mediates the biosynthesis of aspernidine A, a prenylated isoindolinone. The starting point of the biosynthesis of aspernidin A is the production of orsellinaldehyde by the non-reducing polyketide synthase pkfA. Hydroxylation, methylation of one of the phenol groups, and prenylation, presumably catalyzed by the prenyltransferase pkfE, would be needed to yield aspernidine D. Subsequently, the cytochrome P450 monooxygenase pkfB is responsible for hydroxylation of aspernidine D to yield aspernidine E. The dehydrogenase pkfF may be responsible for further oxidation of aspernidine E to form a dialdehyde intermediate which is further transformed in a series of steps, some of which are enzyme-mediated, to generate aspernidine A. The possibility that additional enzymes outside of the cluster are involved in aspernidine A biosynthesis cannot be excluded. This Emericella nidulans (strain FGSC A4 / ATCC 38163 / CBS 112.46 / NRRL 194 / M139) (Aspergillus nidulans) protein is Short-chain dehydrogenase/reductase pkfC.